A 453-amino-acid polypeptide reads, in one-letter code: Ribosomal protein uS12 methylthiotransferase RimO (453 aa).

The 116-residue stretch at 5-120 (PKVGFVSLGC…VMQAVHSHLP (116 aa)) folds into the MTTase N-terminal domain. [4Fe-4S] cluster is bound by residues cysteine 14, cysteine 50, cysteine 79, cysteine 151, cysteine 155, and cysteine 158. The region spanning 137-382 (LTPRHYAYLK…MEVAEEVSAN (246 aa)) is the Radical SAM core domain. The region spanning 385–453 (QRKIGKTLKV…ADGHDLWGEV (69 aa)) is the TRAM domain.

This sequence belongs to the methylthiotransferase family. RimO subfamily. Requires [4Fe-4S] cluster as cofactor.

The protein resides in the cytoplasm. The catalysed reaction is L-aspartate(89)-[ribosomal protein uS12]-hydrogen + (sulfur carrier)-SH + AH2 + 2 S-adenosyl-L-methionine = 3-methylsulfanyl-L-aspartate(89)-[ribosomal protein uS12]-hydrogen + (sulfur carrier)-H + 5'-deoxyadenosine + L-methionine + A + S-adenosyl-L-homocysteine + 2 H(+). In terms of biological role, catalyzes the methylthiolation of an aspartic acid residue of ribosomal protein uS12. The chain is Ribosomal protein uS12 methylthiotransferase RimO from Burkholderia orbicola (strain MC0-3).